The chain runs to 814 residues: Leucine-rich repeat-containing protein 41 (814 aa).

The tract at residues 45–54 (ALFELCGRAV) is interaction with Elongin BC complex. Phosphoserine occurs at positions 155, 276, and 326. The segment at 265–408 (LCGEASRGRA…KKGARTRQGC (144 aa)) is disordered. Residue Thr327 is modified to Phosphothreonine. The span at 354-385 (TKRPPSAPATTSSASASSSTSSSKRAPASSAP) shows a compositional bias: low complexity. Residue Ser375 is modified to Phosphoserine. Positions 389–403 (PLKRFKRAAGKKGAR) are enriched in basic residues. LRR repeat units lie at residues 489–509 (WVSL…IFRL), 520–532 (AGCR…LSDL), 533–557 (FSPL…VLSI), 615–637 (SGSL…FGLV), 638–661 (LQTL…LADC), 703–730 (NSTL…VFSE), and 733–754 (SSSL…LLEF).

In terms of assembly, part of a E3 ubiquitin ligase complex with elongin BC complex (ELOB and ELOC), RBX1 and CUL5.

This chain is Leucine-rich repeat-containing protein 41 (LRRC41), found in Bos taurus (Bovine).